Reading from the N-terminus, the 147-residue chain is UPF0306 protein YhbP (147 aa).

It belongs to the UPF0306 family.

This Escherichia coli O17:K52:H18 (strain UMN026 / ExPEC) protein is UPF0306 protein YhbP.